Consider the following 352-residue polypeptide: Chorismate synthase (352 aa).

NADP(+) contacts are provided by R48 and R54. FMN contacts are provided by residues 125–127 (RSS), 238–239 (NA), G278, 293–297 (KPTSS), and R319.

It belongs to the chorismate synthase family. As to quaternary structure, homotetramer. The cofactor is FMNH2.

It carries out the reaction 5-O-(1-carboxyvinyl)-3-phosphoshikimate = chorismate + phosphate. The protein operates within metabolic intermediate biosynthesis; chorismate biosynthesis; chorismate from D-erythrose 4-phosphate and phosphoenolpyruvate: step 7/7. Functionally, catalyzes the anti-1,4-elimination of the C-3 phosphate and the C-6 proR hydrogen from 5-enolpyruvylshikimate-3-phosphate (EPSP) to yield chorismate, which is the branch point compound that serves as the starting substrate for the three terminal pathways of aromatic amino acid biosynthesis. This reaction introduces a second double bond into the aromatic ring system. The protein is Chorismate synthase of Bordetella petrii (strain ATCC BAA-461 / DSM 12804 / CCUG 43448).